The following is a 152-amino-acid chain: Small ribosomal subunit protein uS15 (152 aa).

Basic residues predominate over residues 1-16 (MARIHARRRGKSGSKR). The interval 1–21 (MARIHARRRGKSGSKRIYRDS) is disordered.

Belongs to the universal ribosomal protein uS15 family. As to quaternary structure, part of the 30S ribosomal subunit.

This chain is Small ribosomal subunit protein uS15, found in Archaeoglobus fulgidus (strain ATCC 49558 / DSM 4304 / JCM 9628 / NBRC 100126 / VC-16).